The chain runs to 441 residues: Transcriptional regulatory protein ZraR (441 aa).

Residues 7–121 form the Response regulatory domain; that stretch reads DILVVDDDVS…RLQETLEKAL (115 aa). D56 carries the post-translational modification 4-aspartylphosphate. Positions 141–370 constitute a Sigma-54 factor interaction domain; sequence MIGSSPAMQH…LENAIERAVV (230 aa). ATP is bound by residues G172, T173, R329, and R359. The segment at residues 421-440 is a DNA-binding region (H-T-H motif); sequence KTEAARQLGITRKTLLAKLS.

Phosphorylated by ZraS.

It localises to the cytoplasm. Its activity is regulated as follows. Activity of the ZraS/ZraR two-component system is repressed by the zinc-bound form of ZraP, which probably interacts with the periplasmic region of ZraS. In terms of biological role, part of the Zra signaling pathway, an envelope stress response (ESR) system composed of the periplasmic accessory protein ZraP, the histidine kinase ZraS and the transcriptional regulator ZraR. The ZraPSR system contributes to antibiotic resistance and is important for membrane integrity in the presence of membrane-targeting biocides. ZraR is a member of the two-component regulatory system ZraS/ZraR. When activated by ZraS, acts in conjunction with sigma-54 to regulate the expression of zraP in the presence of high Zn(2+) or Pb(2+) concentrations. Also positively autoregulates the expression of the zraSR operon. The sequence is that of Transcriptional regulatory protein ZraR (zraR) from Salmonella typhi.